The following is a 124-amino-acid chain: U33-theraphotoxin-Cg1c (124 aa).

The signal sequence occupies residues 1 to 17 (MKFAVAIAFTLLVCVFA). 5 disulfide bridges follow: cysteine 26–cysteine 37, cysteine 31–cysteine 51, cysteine 36–cysteine 75, cysteine 61–cysteine 83, and cysteine 77–cysteine 94. Residues 93–108 (RCQEESGKSDKSKESQ) show a composition bias toward basic and acidic residues. Residues 93-124 (RCQEESGKSDKSKESQGSDESEESEESKESSG) are disordered. Acidic residues predominate over residues 109-118 (GSDESEESEE).

The protein belongs to the neurotoxin 32 family. In terms of tissue distribution, expressed by the venom gland.

Its subcellular location is the secreted. The protein is U33-theraphotoxin-Cg1c of Chilobrachys guangxiensis (Chinese earth tiger tarantula).